The chain runs to 456 residues: Acyl-CoA transferase FPSE_08120 (456 aa).

The transit peptide at 1 to 33 (MARLLFSGQRLRPSFLRSYIRANPSSTPSATRA) directs the protein to the mitochondrion.

The protein belongs to the CoA-transferase III family.

The protein resides in the mitochondrion. Functionally, acyl-CoA transferase; part of the Fusarium detoxification of benzoxazolinone cluster involved in the degradation of benzoxazolinones produced by the host plant. Maize, wheat, and rye produce the 2 benzoxazinone phytoanticipins 2,4-dihy-droxy-7-methoxy-1,4-benzoxazin-3-one (DIMBOA) and 2,4-dihydroxy-1,4-benzoxazin-3-one (DIBOA) that, due to their inherent instability once released, spontaneously degrade to the more stable corresponding benzoxazolinones, 6-methoxy-2-benzoxazolinone (MBOA) and 2-benzoxazolinone (BOA), respectively. The first step in the detoxification of benzoxazolinones involves the hydrolysis of the cyclic ester bond of benzoxazolinones by the gamma-lactamase FDB1 to aminophenols. FDB1 is able to convert 2-benzoxazolinone (BOA) into 2-aminophenol (2-AP), as well as 6-methoxy-2-benzoxazolinone (MBOA) into 5-methoxy-2-aminophenol (2-AMP). The N-malonyltransferase FDB2 then metabolizes aminophenols via N-malonylation to non-toxic malonamic acids. FDB2 converts 2-AP into N-(2-hydroxyphenyl) malonamic acid (HPMA) and 2-AMP into N-(2-hydroxy-4-methoxyphenyl) malonamic acid (HMPMA). The cluster also contains 2 transcription factors (FDB3 and FPSE_08121), an aldo-keto reductase (FPSE_08125) that possibly associates with a ketone component of BOA and MBOA degradation, an esterase (FPSE_08126), an acyl-CoA transferase (FPSE_08120), a solute carrier protein (FPSE_08119) and a transmembrane transporter (FPSE_08127) proposed to shuttle metabolites of benzoxazolinone degradation. This is Acyl-CoA transferase FPSE_08120 from Fusarium pseudograminearum (strain CS3096) (Wheat and barley crown-rot fungus).